The primary structure comprises 275 residues: Tryptophan synthase alpha chain (275 aa).

Residues Glu-60 and Asp-71 each act as proton acceptor in the active site.

The protein belongs to the TrpA family. In terms of assembly, tetramer of two alpha and two beta chains.

It catalyses the reaction (1S,2R)-1-C-(indol-3-yl)glycerol 3-phosphate + L-serine = D-glyceraldehyde 3-phosphate + L-tryptophan + H2O. It participates in amino-acid biosynthesis; L-tryptophan biosynthesis; L-tryptophan from chorismate: step 5/5. The alpha subunit is responsible for the aldol cleavage of indoleglycerol phosphate to indole and glyceraldehyde 3-phosphate. This Prochlorococcus marinus (strain MIT 9313) protein is Tryptophan synthase alpha chain.